The following is a 129-amino-acid chain: Large ribosomal subunit protein uL14m (129 aa).

Belongs to the universal ribosomal protein uL14 family.

The protein localises to the mitochondrion. The chain is Large ribosomal subunit protein uL14m (RPL14) from Acanthamoeba castellanii (Amoeba).